Reading from the N-terminus, the 478-residue chain is SPbeta prophage-derived uncharacterized protein YonD (478 aa).

Positions 326–419 (IQSQLNQKDE…KFSTEEVQNL (94 aa)) form a coiled coil.

The chain is SPbeta prophage-derived uncharacterized protein YonD (yonD) from Bacillus subtilis (strain 168).